The chain runs to 205 residues: Guanylate kinase (205 aa).

The Guanylate kinase-like domain occupies 18–196 (PKLFIISAPA…AYQVLRSIFI (179 aa)). 25–32 (APAGAGKT) contacts ATP.

It belongs to the guanylate kinase family.

The protein localises to the cytoplasm. The enzyme catalyses GMP + ATP = GDP + ADP. Essential for recycling GMP and indirectly, cGMP. In Chlamydia trachomatis serovar D (strain ATCC VR-885 / DSM 19411 / UW-3/Cx), this protein is Guanylate kinase (gmk).